Consider the following 858-residue polypeptide: Zinc finger protein ZXDC (858 aa).

3 disordered regions span residues 1–73, 85–108, and 142–175; these read MDLP…GGDS, DTHG…PAAA, and AAPS…GSPA. Pro residues predominate over residues 59–68; that stretch reads APGPSPPPPE. Residues 142–152 show a composition bias toward low complexity; the sequence is AAPSLHPATTP. 10 C2H2-type zinc fingers span residues 176–200, 209–233, 239–263, 269–291, 298–322, 329–353, 359–383, 389–413, 419–443, and 452–477; these read YRCP…LLTH, FKCP…LQSH, FSCP…MKGH, FKCE…QRSH, YKCD…NRAH, FSCS…LRSH, FICD…KRKH, FTCP…SITH, FECP…SKKH, and SRCP…VRQH. Residues 624 to 634 show a composition bias toward polar residues; it reads DSPALTPSNNL. The segment at 624-652 is disordered; the sequence is DSPALTPSNNLTAPGTTPTSSDTTQETGS. The span at 635–651 shows a compositional bias: low complexity; that stretch reads TAPGTTPTSSDTTQETG. A Glycyl lysine isopeptide (Lys-Gly) (interchain with G-Cter in SUMO) cross-link involves residue lysine 661. Disordered stretches follow at residues 671–714 and 727–751; these read DVVQ…LESG and VKKK…KVKG. The span at 681–692 shows a compositional bias: polar residues; sequence GPSQSVLSSSTE.

This sequence belongs to the ZXD family. As to quaternary structure, self-associates. Interacts with ZXDB and CIITA. Sumoylated at Lys-661 with SUMO1, SUMO2 and SUMO3; sumoylation enhances the activity of the transcriptional activation domain.

It is found in the nucleus. Cooperates with CIITA to promote transcription of MHC class I and MHC class II genes. This is Zinc finger protein ZXDC (Zxdc) from Mus musculus (Mouse).